The following is a 622-amino-acid chain: Threonine--tRNA ligase (622 aa).

Positions 1–134 are editing domain; the sequence is MKTLLIHSDY…GHPLSELSRK (134 aa). The interval 199–498 is catalytic; the sequence is PHVKYIKEKE…TLEDKPPALP (300 aa). Zn(2+)-binding residues include C291, H343, and H467.

It belongs to the class-II aminoacyl-tRNA synthetase family. Homodimer. Zn(2+) serves as cofactor.

It localises to the cytoplasm. The catalysed reaction is tRNA(Thr) + L-threonine + ATP = L-threonyl-tRNA(Thr) + AMP + diphosphate + H(+). Catalyzes the attachment of threonine to tRNA(Thr) in a two-step reaction: L-threonine is first activated by ATP to form Thr-AMP and then transferred to the acceptor end of tRNA(Thr). Also edits incorrectly charged L-seryl-tRNA(Thr). The polypeptide is Threonine--tRNA ligase (Methanococcus vannielii (strain ATCC 35089 / DSM 1224 / JCM 13029 / OCM 148 / SB)).